The following is a 428-amino-acid chain: Protein clpf-1 (428 aa).

Residues Glu16, Arg56, and 124–129 contribute to the ATP site; that span reads DVGKTT.

The protein belongs to the Clp1 family. Clp1 subfamily.

It is found in the nucleus. Functionally, required for endonucleolytic cleavage during polyadenylation-dependent pre-mRNA 3'-end formation. The chain is Protein clpf-1 from Caenorhabditis elegans.